We begin with the raw amino-acid sequence, 202 residues long: Dephospho-CoA kinase (202 aa).

In terms of domain architecture, DPCK spans 6 to 202 (KVSITGDLSS…EYFYALKGAL (197 aa)). 14–19 (SSGKTE) contributes to the ATP binding site.

It belongs to the CoaE family.

It is found in the cytoplasm. The catalysed reaction is 3'-dephospho-CoA + ATP = ADP + CoA + H(+). It functions in the pathway cofactor biosynthesis; coenzyme A biosynthesis; CoA from (R)-pantothenate: step 5/5. Its function is as follows. Catalyzes the phosphorylation of the 3'-hydroxyl group of dephosphocoenzyme A to form coenzyme A. The protein is Dephospho-CoA kinase of Chlamydia caviae (strain ATCC VR-813 / DSM 19441 / 03DC25 / GPIC) (Chlamydophila caviae).